A 141-amino-acid polypeptide reads, in one-letter code: Large ribosomal subunit protein uL16m (141 aa).

This sequence belongs to the universal ribosomal protein uL16 family.

Its subcellular location is the mitochondrion. This Acanthamoeba castellanii (Amoeba) protein is Large ribosomal subunit protein uL16m (RPL16).